We begin with the raw amino-acid sequence, 387 residues long: MSEYSLFTSESVSEGHPDKIADQVSDAILDAILAEDPEARVACETLVKTGMVLVAGEVRTNAWVDIEEIARGVIREIGYNSSDMGFDWESCAVMNAIGKQSADIAVGVDEAGEHEQGAGDQGLMFGFATNETDVLMPAPITYAHRLVQRQAEVRKNGTLDFLRPDAKSQVTFRYDENGKPCAIDAVVLSTQHSASVKQADLREAVMEEIIKPVLPAEWLSKETKYFINPTGQFIIGGPVGDCGLTGRKIIVDTYGGMARHGGGAFSGKDPSKVDRSAAYAGRYVAKNIVAAGLADKCEIQISYAIGVAEPTSISINTFGTGKVSDAVISQLVREHFELRPAGLIKMLDLKRPIYLPTAAYGHFGREGENFTWEKTDKADALRKAAGL.

An ATP-binding site is contributed by H16. D18 lines the Mg(2+) pocket. E44 lines the K(+) pocket. E57 and Q100 together coordinate L-methionine. The interval 100 to 110 is flexible loop; that stretch reads QSADIAVGVDE. Residues 165 to 167, D241, 247 to 248, A264, and K268 contribute to the ATP site; these read DAK and RK. D241 is a binding site for L-methionine. K272 lines the L-methionine pocket.

It belongs to the AdoMet synthase family. In terms of assembly, homotetramer; dimer of dimers. The cofactor is Mg(2+). It depends on K(+) as a cofactor.

The protein localises to the cytoplasm. It catalyses the reaction L-methionine + ATP + H2O = S-adenosyl-L-methionine + phosphate + diphosphate. Its pathway is amino-acid biosynthesis; S-adenosyl-L-methionine biosynthesis; S-adenosyl-L-methionine from L-methionine: step 1/1. In terms of biological role, catalyzes the formation of S-adenosylmethionine (AdoMet) from methionine and ATP. The overall synthetic reaction is composed of two sequential steps, AdoMet formation and the subsequent tripolyphosphate hydrolysis which occurs prior to release of AdoMet from the enzyme. The polypeptide is S-adenosylmethionine synthase (Marinomonas sp. (strain MWYL1)).